The primary structure comprises 362 residues: Olfactory receptor 5AU1 (362 aa).

Residues 1 to 79 are Extracellular-facing; the sequence is MTEFHLQSQM…TDPQLQRLLF (79 aa). N-linked (GlcNAc...) asparagine glycosylation occurs at asparagine 56. A helical membrane pass occupies residues 80-100; the sequence is VVFLGMYTATLLGNLVMFLLI. The Cytoplasmic portion of the chain corresponds to 101 to 116; sequence HVSATLHTPMYSLLKS. A helical membrane pass occupies residues 117–139; it reads LSFLDFCYSSTVVPQTLVNFLAK. At 140–150 the chain is on the extracellular side; sequence RKVISYFGCMT. An intrachain disulfide couples cysteine 148 to cysteine 230. The chain crosses the membrane as a helical span at residues 151–171; sequence QMFFYAGFATSECYLIAAMAY. At 172–194 the chain is on the cytoplasmic side; that stretch reads DRYAAICNPLLYSTIMSPEVCAS. The chain crosses the membrane as a helical span at residues 195 to 215; the sequence is LIVGSYSAGFLNSLIHTGCIF. Topologically, residues 216-247 are extracellular; sequence SLKFCGAHVVTHFFCDGPPILSLSCVDTSLCE. A helical membrane pass occupies residues 248–268; that stretch reads ILLFIFAGFNLLSCTLTILIS. Residues 269–290 are Cytoplasmic-facing; that stretch reads YFLILNTILKMSSAQGRFKAFS. The helical transmembrane segment at 291-311 threads the bilayer; that stretch reads TCASHLTAICLFFGTTLFMYL. Residues 312–322 lie on the Extracellular side of the membrane; sequence RPRSSYSLTQD. The helical transmembrane segment at 323–343 threads the bilayer; the sequence is RTVAVIYTVVIPVLNPLMYSL. Residues 344–362 lie on the Cytoplasmic side of the membrane; the sequence is RNKDVKKALIKVWGRKTME.

It belongs to the G-protein coupled receptor 1 family.

It localises to the cell membrane. In terms of biological role, odorant receptor. The sequence is that of Olfactory receptor 5AU1 (OR5AU1) from Homo sapiens (Human).